A 204-amino-acid polypeptide reads, in one-letter code: Golgi to ER traffic protein 1 (204 aa).

The Lumenal portion of the chain corresponds to 1–11; the sequence is MLTLDIDPYTI. Residues 12 to 31 traverse the membrane as a helical segment; sequence LVTSFLILAIQKLVTVIGKQ. The Cytoplasmic segment spans residues 32-116; the sequence is KIQLYIWQIY…RIDSITKLAI (85 aa). Positions 78–113 form a coiled coil; the sequence is AKWTKINRALDKLKLEVQELNETIAGEKTRIDSITK. Residues 117–137 traverse the membrane as a helical segment; that stretch reads TLILTLPIWFLRIFCRKTALL. Residues 138 to 161 lie on the Lumenal side of the membrane; sequence YIRKGILPAYLEWWLALPFFKSGT. Residues 162–178 form a helical membrane-spanning segment; sequence IGLTCWMFVVNSVLSNL. The Cytoplasmic portion of the chain corresponds to 179–204; sequence IFLISFPFTQKVERPIKPKNEQKTES.

This sequence belongs to the WRB/GET1 family. Component of the Golgi to ER traffic (GET) complex, which is composed of GET1, GET2 and GET3. Within the complex, GET1 and GET2 form a heterotetramer which is stabilized by phosphatidylinositol binding and which binds to the GET3 homodimer.

The protein resides in the endoplasmic reticulum membrane. The protein localises to the golgi apparatus membrane. Functionally, required for the post-translational delivery of tail-anchored (TA) proteins to the endoplasmic reticulum. Together with GET2, acts as a membrane receptor for soluble GET3, which recognizes and selectively binds the transmembrane domain of TA proteins in the cytosol. The GET complex cooperates with the HDEL receptor ERD2 to mediate the ATP-dependent retrieval of resident ER proteins that contain a C-terminal H-D-E-L retention signal from the Golgi to the ER. The polypeptide is Golgi to ER traffic protein 1 (Lodderomyces elongisporus (strain ATCC 11503 / CBS 2605 / JCM 1781 / NBRC 1676 / NRRL YB-4239) (Yeast)).